Reading from the N-terminus, the 234-residue chain is Sugar fermentation stimulation protein A (234 aa).

Residues 201-220 constitute a DNA-binding region (H-T-H motif); sequence LLSEAQNKGVEVLAYKAELS.

The protein belongs to the SfsA family.

Binds to DNA non-specifically. Could be a regulatory factor involved in maltose metabolism. This is Sugar fermentation stimulation protein A from Salmonella arizonae (strain ATCC BAA-731 / CDC346-86 / RSK2980).